Here is a 389-residue protein sequence, read N- to C-terminus: uncharacterized protein (389 aa).

Transmembrane regions (helical) follow at residues 31 to 51, 96 to 116, 123 to 143, and 152 to 172; these read LFIVHSAIGAGVAYWIAVEVI, IMQIGTGYWQIFVVVGLALLV, APLVSNQMAIGGILIATMFPP, and MIDAFIGGGVGILVIALLPSS.

To M.tuberculosis Rv2571c.

The protein localises to the cell membrane. This is an uncharacterized protein from Corynebacterium glutamicum (strain ATCC 13032 / DSM 20300 / JCM 1318 / BCRC 11384 / CCUG 27702 / LMG 3730 / NBRC 12168 / NCIMB 10025 / NRRL B-2784 / 534).